The chain runs to 96 residues: Small ribosomal subunit protein bS6 (96 aa).

Belongs to the bacterial ribosomal protein bS6 family.

Functionally, binds together with bS18 to 16S ribosomal RNA. This is Small ribosomal subunit protein bS6 from Cutibacterium acnes (strain DSM 16379 / KPA171202) (Propionibacterium acnes).